The sequence spans 481 residues: tRNA-2-methylthio-N(6)-dimethylallyladenosine synthase (481 aa).

Positions 24-140 (RKLFIESYGC…LPNLINEVEE (117 aa)) constitute an MTTase N-terminal domain. [4Fe-4S] cluster-binding residues include Cys-33, Cys-69, Cys-103, Cys-178, Cys-182, and Cys-185. One can recognise a Radical SAM core domain in the interval 164–410 (QSNGVSAFVS…VDLQQKHSKQ (247 aa)). The region spanning 413 to 476 (NSVIGTTVEV…SATLIGEPIG (64 aa)) is the TRAM domain.

This sequence belongs to the methylthiotransferase family. MiaB subfamily. In terms of assembly, monomer. Requires [4Fe-4S] cluster as cofactor.

The protein resides in the cytoplasm. It catalyses the reaction N(6)-dimethylallyladenosine(37) in tRNA + (sulfur carrier)-SH + AH2 + 2 S-adenosyl-L-methionine = 2-methylsulfanyl-N(6)-dimethylallyladenosine(37) in tRNA + (sulfur carrier)-H + 5'-deoxyadenosine + L-methionine + A + S-adenosyl-L-homocysteine + 2 H(+). In terms of biological role, catalyzes the methylthiolation of N6-(dimethylallyl)adenosine (i(6)A), leading to the formation of 2-methylthio-N6-(dimethylallyl)adenosine (ms(2)i(6)A) at position 37 in tRNAs that read codons beginning with uridine. The protein is tRNA-2-methylthio-N(6)-dimethylallyladenosine synthase of Christiangramia forsetii (strain DSM 17595 / CGMCC 1.15422 / KT0803) (Gramella forsetii).